The sequence spans 62 residues: Beta-defensin 10 (62 aa).

Residues 1–22 form the signal peptide; the sequence is MRLHHLLLLLLLVVLSSGSGFT. Q23 carries the pyrrolidone carboxylic acid modification. 3 cysteine pairs are disulfide-bonded: C31-C60, C38-C53, and C43-C61.

This sequence belongs to the beta-defensin family. In terms of tissue distribution, neutrophilic granules.

Its subcellular location is the secreted. Has bactericidal activity. Active against E.coli ML35 and S.aureus 502A. The sequence is that of Beta-defensin 10 (DEFB10) from Bos taurus (Bovine).